We begin with the raw amino-acid sequence, 189 residues long: Thermostable direct hemolysin 2 (189 aa).

The first 24 residues, 1-24, serve as a signal peptide directing secretion; the sequence is MKYRYFAKKSFLFISMLAAFKTFA. Cysteines 175 and 185 form a disulfide.

Belongs to the TDH hemolysin family. In terms of assembly, homodimer.

Functionally, bacterial hemolysins are exotoxins that attack blood cell membranes and cause cell rupture by mechanisms not clearly defined. The chain is Thermostable direct hemolysin 2 (tdh2) from Vibrio parahaemolyticus serotype O3:K6 (strain RIMD 2210633).